A 235-amino-acid chain; its full sequence is Large ribosomal subunit protein uL1 (235 aa).

This sequence belongs to the universal ribosomal protein uL1 family. In terms of assembly, part of the 50S ribosomal subunit.

In terms of biological role, binds directly to 23S rRNA. The L1 stalk is quite mobile in the ribosome, and is involved in E site tRNA release. Functionally, protein L1 is also a translational repressor protein, it controls the translation of the L11 operon by binding to its mRNA. The polypeptide is Large ribosomal subunit protein uL1 (Mycobacterium marinum (strain ATCC BAA-535 / M)).